A 143-amino-acid chain; its full sequence is Holo-[acyl-carrier-protein] synthase (143 aa).

Positions 9 and 63 each coordinate Mg(2+).

The protein belongs to the P-Pant transferase superfamily. AcpS family. The cofactor is Mg(2+).

It is found in the cytoplasm. The catalysed reaction is apo-[ACP] + CoA = holo-[ACP] + adenosine 3',5'-bisphosphate + H(+). Functionally, transfers the 4'-phosphopantetheine moiety from coenzyme A to a Ser of acyl-carrier-protein. The protein is Holo-[acyl-carrier-protein] synthase of Burkholderia pseudomallei (strain 668).